Consider the following 234-residue polypeptide: Aspartate/glutamate leucyltransferase (234 aa).

Belongs to the R-transferase family. Bpt subfamily.

Its subcellular location is the cytoplasm. It catalyses the reaction N-terminal L-glutamyl-[protein] + L-leucyl-tRNA(Leu) = N-terminal L-leucyl-L-glutamyl-[protein] + tRNA(Leu) + H(+). The enzyme catalyses N-terminal L-aspartyl-[protein] + L-leucyl-tRNA(Leu) = N-terminal L-leucyl-L-aspartyl-[protein] + tRNA(Leu) + H(+). Its function is as follows. Functions in the N-end rule pathway of protein degradation where it conjugates Leu from its aminoacyl-tRNA to the N-termini of proteins containing an N-terminal aspartate or glutamate. The polypeptide is Aspartate/glutamate leucyltransferase (Hahella chejuensis (strain KCTC 2396)).